A 286-amino-acid chain; its full sequence is Divergent deoxyribose-phosphate aldolase-like protein (286 aa).

In terms of assembly, homodimer. Interacts with ADF; the interaction enhances ADF activity in disassembly of filamentous actin and inhibition of actin polymerization.

Its subcellular location is the cytoplasm. In terms of biological role, involved in regulation of actin dynamics. The polypeptide is Divergent deoxyribose-phosphate aldolase-like protein (Toxoplasma gondii).